Here is a 398-residue protein sequence, read N- to C-terminus: ATP-dependent RNA helicase RhlB (398 aa).

Positions 9–37 match the Q motif motif; that stretch reads TRFHDFKLSNELMHAIHDLGFPYCTPIQA. The region spanning 40–220 is the Helicase ATP-binding domain; it reads LGYTLRGQDA…KQWTTNPAIV (181 aa). An ATP-binding site is contributed by 53-60; that stretch reads AQTGTGKT. A DEAD box motif is present at residues 166–169; sequence DEAD. Residues 243–393 form the Helicase C-terminal domain; the sequence is DKYKLLYNLV…MPPDELLKPV (151 aa).

It belongs to the DEAD box helicase family. RhlB subfamily. As to quaternary structure, component of the RNA degradosome, which is a multiprotein complex involved in RNA processing and mRNA degradation.

It is found in the cytoplasm. It catalyses the reaction ATP + H2O = ADP + phosphate + H(+). Functionally, DEAD-box RNA helicase involved in RNA degradation. Has RNA-dependent ATPase activity and unwinds double-stranded RNA. This Pseudomonas putida (strain ATCC 47054 / DSM 6125 / CFBP 8728 / NCIMB 11950 / KT2440) protein is ATP-dependent RNA helicase RhlB.